Reading from the N-terminus, the 265-residue chain is Hydroxyethylthiazole kinase (265 aa).

A substrate-binding site is contributed by Met50. 2 residues coordinate ATP: Arg125 and Thr171. Gly198 serves as a coordination point for substrate.

This sequence belongs to the Thz kinase family. Mg(2+) serves as cofactor.

It catalyses the reaction 5-(2-hydroxyethyl)-4-methylthiazole + ATP = 4-methyl-5-(2-phosphooxyethyl)-thiazole + ADP + H(+). Its pathway is cofactor biosynthesis; thiamine diphosphate biosynthesis; 4-methyl-5-(2-phosphoethyl)-thiazole from 5-(2-hydroxyethyl)-4-methylthiazole: step 1/1. Its function is as follows. Catalyzes the phosphorylation of the hydroxyl group of 4-methyl-5-beta-hydroxyethylthiazole (THZ). The chain is Hydroxyethylthiazole kinase from Cronobacter sakazakii (strain ATCC BAA-894) (Enterobacter sakazakii).